The sequence spans 488 residues: GTPase Der (488 aa).

2 consecutive EngA-type G domains span residues 3-166 (PVIA…PRDP) and 193-366 (IKIA…MSAV). GTP contacts are provided by residues 9-16 (GRPNVGKS), 56-60 (DTGGI), 118-121 (NKID), 199-206 (GRPNVGKS), 246-250 (DTAGV), and 311-314 (NKWD). Positions 367-451 (TRWPTSRLTQ…PIRIEYKGGD (85 aa)) constitute a KH-like domain. Residues 449 to 461 (GGDNPFEGKKNTL) are compositionally biased toward basic and acidic residues. Positions 449–488 (GGDNPFEGKKNTLTDRQVNKKRRLMSHHKKAEKKRRDKRK) are disordered. Residues 467-488 (NKKRRLMSHHKKAEKKRRDKRK) show a composition bias toward basic residues.

This sequence belongs to the TRAFAC class TrmE-Era-EngA-EngB-Septin-like GTPase superfamily. EngA (Der) GTPase family. In terms of assembly, associates with the 50S ribosomal subunit.

In terms of biological role, GTPase that plays an essential role in the late steps of ribosome biogenesis. This is GTPase Der from Pseudomonas entomophila (strain L48).